The primary structure comprises 248 residues: tRNA (guanine-N(1)-)-methyltransferase (248 aa).

Residues glycine 113 and 133-138 (IGDYVL) contribute to the S-adenosyl-L-methionine site.

It belongs to the RNA methyltransferase TrmD family. In terms of assembly, homodimer.

The protein resides in the cytoplasm. It catalyses the reaction guanosine(37) in tRNA + S-adenosyl-L-methionine = N(1)-methylguanosine(37) in tRNA + S-adenosyl-L-homocysteine + H(+). In terms of biological role, specifically methylates guanosine-37 in various tRNAs. This chain is tRNA (guanine-N(1)-)-methyltransferase, found in Shewanella woodyi (strain ATCC 51908 / MS32).